A 372-amino-acid chain; its full sequence is Nickel transporter NicT (372 aa).

Helical transmembrane passes span 30 to 50 (LMFA…TLLV), 55 to 75 (LSLG…TLGL), 104 to 124 (VGFF…VMLV), 152 to 172 (ISGA…VGIV), 218 to 238 (VGFL…LVLA), 245 to 265 (GLPW…MCLL), 294 to 314 (VTGL…LGLI), and 335 to 355 (TVGF…LLVW).

The protein belongs to the NiCoT transporter (TC 2.A.52) family.

The protein localises to the cell membrane. It carries out the reaction Ni(2+)(in) = Ni(2+)(out). Export of the fluoroquinolone antibiotic norfloxacin is inhibited by the proton ionophore carbonyl cyanide m-chlorophenylhydrazone (CCCP). Nickel may influence the extrusion of antibiotics possibly by facilitating the proton motive force-dependent efflux process. Involved in nickel uptake. In addition, acts as a drug efflux pump and contributes to moderate tolerance towards different classes of antibiotics, including fluoroquinolones, aminoglycosides and the anti-TB drug isoniazid, with a preference for fluoroquinolones. The drug efflux function is probably dependent on proton motive force (pmf) or ion gradient, and might be facilitated by the presence of Ni(2+) ions. The sequence is that of Nickel transporter NicT from Mycobacterium tuberculosis (strain ATCC 25618 / H37Rv).